A 358-amino-acid polypeptide reads, in one-letter code: Peptide chain release factor 1 (358 aa).

Gln-233 bears the N5-methylglutamine mark.

This sequence belongs to the prokaryotic/mitochondrial release factor family. Methylated by PrmC. Methylation increases the termination efficiency of RF1.

The protein resides in the cytoplasm. Its function is as follows. Peptide chain release factor 1 directs the termination of translation in response to the peptide chain termination codons UAG and UAA. The polypeptide is Peptide chain release factor 1 (Lachnoclostridium phytofermentans (strain ATCC 700394 / DSM 18823 / ISDg) (Clostridium phytofermentans)).